We begin with the raw amino-acid sequence, 222 residues long: Large ribosomal subunit protein uL4 (222 aa).

The segment at threonine 50–alanine 72 is disordered.

The protein belongs to the universal ribosomal protein uL4 family. Part of the 50S ribosomal subunit.

In terms of biological role, one of the primary rRNA binding proteins, this protein initially binds near the 5'-end of the 23S rRNA. It is important during the early stages of 50S assembly. It makes multiple contacts with different domains of the 23S rRNA in the assembled 50S subunit and ribosome. Functionally, forms part of the polypeptide exit tunnel. This chain is Large ribosomal subunit protein uL4, found in Chlamydia muridarum (strain MoPn / Nigg).